The chain runs to 465 residues: FeMo cofactor biosynthesis protein FixZ (465 aa).

The tract at residues 1–36 is disordered; that stretch reads MSEPEIKVGKTSSALFDRAPMAPSMPGGRASSSHGL. The Radical SAM core domain occupies 61–312; sequence HHYFARMHXX…MRHCQQCRAD (252 aa). [4Fe-4S] cluster contacts are provided by Cys-75 and Cys-79. Tyr-81 is an S-adenosyl-L-methionine binding site. Cys-82 serves as a coordination point for [4Fe-4S] cluster. S-adenosyl-L-methionine-binding residues include Gly-129, Thr-181, and Ile-233. Positions 306 and 309 each coordinate [4Fe-4S] cluster.

This sequence belongs to the radical SAM superfamily. NifB family. Requires [4Fe-4S] cluster as cofactor.

It participates in cofactor biosynthesis; Fe-Mo cofactor biosynthesis. Involved in the biosynthesis of the iron-molybdenum cofactor (FeMo-co or M-cluster) found in the dinitrogenase enzyme of the nitrogenase complex in nitrogen-fixing microorganisms. Catalyzes the crucial step of radical SAM-dependent carbide insertion that occurs concomitant with the insertion of a 9th sulfur and the rearrangement/coupling of two [4Fe-4S] clusters into a [8Fe-9S-C] cluster, the precursor to the M-cluster. This Rhizobium leguminosarum protein is FeMo cofactor biosynthesis protein FixZ (fixZ).